A 155-amino-acid polypeptide reads, in one-letter code: Pathogenesis-related protein A (155 aa).

The protein belongs to the BetVI family.

The sequence is that of Pathogenesis-related protein A (PCPR1-1) from Petroselinum crispum (Parsley).